The chain runs to 506 residues: ATP-dependent rRNA helicase RRP3 (506 aa).

Disordered regions lie at residues methionine 1–glutamate 22 and asparagine 37–phenylalanine 88. The span at serine 49 to valine 69 shows a compositional bias: acidic residues. A Q motif motif is present at residues glutamate 86–alanine 114. One can recognise a Helicase ATP-binding domain in the interval isoleucine 117 to cysteine 289. ATP is bound at residue alanine 130–threonine 137. The short motif at aspartate 236 to aspartate 239 is the DEAD box element. One can recognise a Helicase C-terminal domain in the interval leucine 312–leucine 460. The segment at isoleucine 485 to arginine 506 is disordered. Residues alanine 496 to arginine 506 are compositionally biased toward basic and acidic residues.

Belongs to the DEAD box helicase family. DDX47/RRP3 subfamily. In terms of assembly, interacts with the SSU processome.

It is found in the nucleus. The catalysed reaction is ATP + H2O = ADP + phosphate + H(+). Functionally, ATP-dependent rRNA helicase required for pre-ribosomal RNA processing. Involved in the maturation of the 35S-pre-rRNA and to its cleavage to mature 18S rRNA. The chain is ATP-dependent rRNA helicase RRP3 from Vanderwaltozyma polyspora (strain ATCC 22028 / DSM 70294 / BCRC 21397 / CBS 2163 / NBRC 10782 / NRRL Y-8283 / UCD 57-17) (Kluyveromyces polysporus).